A 368-amino-acid polypeptide reads, in one-letter code: 4-hydroxy-3-methylbut-2-en-1-yl diphosphate synthase (flavodoxin) (368 aa).

Cys268, Cys271, Cys303, and Glu310 together coordinate [4Fe-4S] cluster.

Belongs to the IspG family. The cofactor is [4Fe-4S] cluster.

The enzyme catalyses (2E)-4-hydroxy-3-methylbut-2-enyl diphosphate + oxidized [flavodoxin] + H2O + 2 H(+) = 2-C-methyl-D-erythritol 2,4-cyclic diphosphate + reduced [flavodoxin]. Its pathway is isoprenoid biosynthesis; isopentenyl diphosphate biosynthesis via DXP pathway; isopentenyl diphosphate from 1-deoxy-D-xylulose 5-phosphate: step 5/6. Functionally, converts 2C-methyl-D-erythritol 2,4-cyclodiphosphate (ME-2,4cPP) into 1-hydroxy-2-methyl-2-(E)-butenyl 4-diphosphate. In Bacillus cytotoxicus (strain DSM 22905 / CIP 110041 / 391-98 / NVH 391-98), this protein is 4-hydroxy-3-methylbut-2-en-1-yl diphosphate synthase (flavodoxin).